The following is a 583-amino-acid chain: J protein JJJ2 (583 aa).

Positions 11–79 (RTTYYSILGL…KLRYDRDLKI (69 aa)) constitute a J domain. Residues 215 to 224 (SYSEDPNSCL) are compositionally biased toward polar residues. The segment at 215-313 (SYSEDPNSCL…SGSHDSNLQS (99 aa)) is disordered. Ser-229 bears the Phosphoserine mark. The span at 240 to 252 (QQQQQQQQQQQQQ) shows a compositional bias: low complexity. Positions 262–281 (SPDEEKKNNKEPKRESRVSP) are enriched in basic and acidic residues. Residues 298-313 (KTSTFSSGSHDSNLQS) show a composition bias toward polar residues.

The protein localises to the cytoplasm. It is found in the nucleus. In Saccharomyces cerevisiae (strain ATCC 204508 / S288c) (Baker's yeast), this protein is J protein JJJ2 (JJJ2).